Consider the following 192-residue polypeptide: Cytidylate kinase (192 aa).

7–15 is an ATP binding site; it reads GPAGSGKST.

It belongs to the cytidylate kinase family. Type 2 subfamily.

Its subcellular location is the cytoplasm. The catalysed reaction is CMP + ATP = CDP + ADP. It catalyses the reaction dCMP + ATP = dCDP + ADP. This Natronomonas pharaonis (strain ATCC 35678 / DSM 2160 / CIP 103997 / JCM 8858 / NBRC 14720 / NCIMB 2260 / Gabara) (Halobacterium pharaonis) protein is Cytidylate kinase.